We begin with the raw amino-acid sequence, 472 residues long: MTEFGIRNMDQVAPVYNGHRGMLKRQLAFDNVQVPTSLYCGLFSAYEEEQAVPTGLDSYPHDSSSCELPLLTPCSKAVMSQALKDTFNGFAKERCRLGIPGNPWLWDENNVLQWLLWAAKEFSLENVNFQKFLMNGHELCSLGKERFLALAPDFVGDILWEHLEEMMKEYQEKAQEPYIDHSNRDSLNQWMNADSLNFTADPLQCGAQVHNYPKNGMYNDMCSVPTGQTLLNPKQEFQQYPSSCLKSRAVNYPPASQDFARSHMNVLLNSLNSGKLRDYDSGDSGTESFESTESLLHSWTSQSSLVDMQRVPSYDSFEEDGNQTLCLNKQPMSFKDYIQDRCEPAELGKPVIPASILAGFTGSGPIQLWQFLLELLTDKSCQSFISWTGDGWEFKLADPDEVARRWGKRKNKPKMNYEKLSRGLRYYYDKNIIHKTSGKRYVYRFVCDLHNLLGYTPDELHAMLGVQPDTDE.

The 86-residue stretch at 85–170 (DTFNGFAKER…EHLEEMMKEY (86 aa)) folds into the PNT domain. The segment at residues 366 to 446 (IQLWQFLLEL…SGKRYVYRFV (81 aa)) is a DNA-binding region (ETS).

It belongs to the ETS family.

The protein resides in the nucleus. Its function is as follows. Probable transcription factor. The protein is Protein c-ets-2-B (ets2-b) of Xenopus laevis (African clawed frog).